The following is a 1926-amino-acid chain: Myosin-15 (1926 aa).

The Myosin N-terminal SH3-like domain maps to 29 to 79; that stretch reads DGKKKCWIPDGENAYIEAEVKGSEDDGTVIVETADGESLSIKEDKIQQMNP. The Myosin motor domain maps to 83-770; sequence EMIEDMAMLT…FLGQLEAIRD (688 aa). Lys127 carries the post-translational modification N6,N6,N6-trimethyllysine. 176-183 serves as a coordination point for ATP; it reads GESGAGKT. 2 actin-binding regions span residues 647–669 and 749–763; these read LNKL…NPNV and RFGI…GFLG. Residues 773-802 form the IQ domain; that stretch reads LSKVFTLFQARAQGKLMRIKFQKILEERDA. A coiled-coil region spans residues 833-1926; sequence KSSEVGEEVA…REFGKKVQEE (1094 aa).

Belongs to the TRAFAC class myosin-kinesin ATPase superfamily. Myosin family. As to quaternary structure, muscle myosin is a hexameric protein that consists of 2 heavy chain subunits (MHC), 2 alkali light chain subunits (MLC) and 2 regulatory light chain subunits (MLC-2).

It localises to the cytoplasm. Its subcellular location is the myofibril. Its function is as follows. Muscle contraction. This is Myosin-15 (MYH15) from Homo sapiens (Human).